The primary structure comprises 209 residues: Ubiquitin-conjugating enzyme E2 S (209 aa).

Residues 14-160 (QTIRQVMREL…ARMMTEIHAQ (147 aa)) form the UBC core domain. C98 acts as the Glycyl thioester intermediate in catalysis. The disordered stretch occupies residues 164 to 209 (CAAGAAGDSKDDDGPSTKKHAGLDKKLQDKKKEKLLKEKKRMLKRL). The span at 171-199 (DSKDDDGPSTKKHAGLDKKLQDKKKEKLL) shows a compositional bias: basic and acidic residues. A compositionally biased stretch (basic residues) spans 200–209 (KEKKRMLKRL).

It belongs to the ubiquitin-conjugating enzyme family.

The catalysed reaction is S-ubiquitinyl-[E1 ubiquitin-activating enzyme]-L-cysteine + [E2 ubiquitin-conjugating enzyme]-L-cysteine = [E1 ubiquitin-activating enzyme]-L-cysteine + S-ubiquitinyl-[E2 ubiquitin-conjugating enzyme]-L-cysteine.. It functions in the pathway protein modification; protein ubiquitination. Its function is as follows. Catalyzes the covalent attachment of ubiquitin to other proteins. Acts as an essential factor of the anaphase promoting complex/cyclosome (APC/C), a cell cycle-regulated ubiquitin ligase that controls progression through mitosis. Acts by specifically elongating polyubiquitin chains initiated by the E2 enzyme vih/UbcH10 on APC/C substrates, enhancing the degradation of APC/C substrates by the proteasome and promoting mitotic exit. The protein is Ubiquitin-conjugating enzyme E2 S of Drosophila ananassae (Fruit fly).